The primary structure comprises 207 residues: Oligoribonuclease (207 aa).

The Exonuclease domain occupies 8-172; the sequence is LVWIDCEMTG…ADILESVREL (165 aa). Tyrosine 129 is a catalytic residue.

Belongs to the oligoribonuclease family.

Its subcellular location is the cytoplasm. Its function is as follows. 3'-to-5' exoribonuclease specific for small oligoribonucleotides. The protein is Oligoribonuclease of Leifsonia xyli subsp. xyli (strain CTCB07).